The primary structure comprises 220 residues: Octanoyltransferase (220 aa).

The 182-residue stretch at Pro-27–Val-208 folds into the BPL/LPL catalytic domain. Substrate-binding positions include Arg-66–His-73, Ala-139–Gly-141, and Gly-152–Ala-154. The active-site Acyl-thioester intermediate is Cys-170.

The protein belongs to the LipB family.

The protein localises to the cytoplasm. The enzyme catalyses octanoyl-[ACP] + L-lysyl-[protein] = N(6)-octanoyl-L-lysyl-[protein] + holo-[ACP] + H(+). It functions in the pathway protein modification; protein lipoylation via endogenous pathway; protein N(6)-(lipoyl)lysine from octanoyl-[acyl-carrier-protein]: step 1/2. In terms of biological role, catalyzes the transfer of endogenously produced octanoic acid from octanoyl-acyl-carrier-protein onto the lipoyl domains of lipoate-dependent enzymes. Lipoyl-ACP can also act as a substrate although octanoyl-ACP is likely to be the physiological substrate. This Bordetella parapertussis (strain 12822 / ATCC BAA-587 / NCTC 13253) protein is Octanoyltransferase.